The chain runs to 262 residues: MAHLLEKTRKITSILKRSEEQLQEELPYNDITRQLAEIMDCNACIVNSKGRLLGYFMRYKTNNDRVEAFYQTKMFPDDYIRSANLIYDTEANLPVEHELSIFPVETQSDFPDGLTTIAPIHVSGIRLGSLIIWRNDEKFDNDDLVLVEISSTVVGIQLLNFQREEDEKNIRRRTAVTMAVNTLSYSELRAVSAILGELNGNEGHLTASVIADRIGITRSVIVNALRKLESAGIIESRSLGMKGTYLKVLIPDVFEEIKKRDY.

The tract at residues 1–159 (MAHLLEKTRK…SSTVVGIQLL (159 aa)) is GAF domain. Positions 207–226 (ASVIADRIGITRSVIVNALR) form a DNA-binding region, H-T-H motif.

This sequence belongs to the CodY family.

The protein resides in the cytoplasm. Its function is as follows. DNA-binding global transcriptional regulator which is involved in the adaptive response to starvation and acts by directly or indirectly controlling the expression of numerous genes in response to nutrient availability. During rapid exponential growth, CodY is highly active and represses genes whose products allow adaptation to nutrient depletion. In Streptococcus gordonii (strain Challis / ATCC 35105 / BCRC 15272 / CH1 / DL1 / V288), this protein is Global transcriptional regulator CodY.